The following is a 342-amino-acid chain: Galactose mutarotase (342 aa).

Ser-14 is modified (phosphoserine). Beta-D-galactose is bound by residues 81-82 (NR) and His-107. Ser-124 is subject to Phosphoserine. His-176 serves as the catalytic Proton donor. Beta-D-galactose-binding positions include 176-178 (HSY), Asp-243, Gln-279, and Glu-307. Glu-307 acts as the Proton acceptor in catalysis.

This sequence belongs to the aldose epimerase family. As to quaternary structure, monomer.

Its subcellular location is the cytoplasm. The catalysed reaction is alpha-D-galactose = beta-D-galactose. It carries out the reaction alpha-D-glucose = beta-D-glucose. The protein operates within carbohydrate metabolism; hexose metabolism. It functions in the pathway carbohydrate metabolism; galactose metabolism. Its function is as follows. Mutarotase that catalyzes the interconversion of beta-D-galactose and alpha-D-galactose during galactose metabolism. Beta-D-galactose is metabolized in the liver into glucose 1-phosphate, the primary metabolic fuel, by the action of four enzymes that constitute the Leloir pathway: GALM, GALK1 (galactokinase), GALT (galactose-1-phosphate uridylyltransferase) and GALE (UDP-galactose-4'-epimerase). Involved in the maintenance of the equilibrium between the beta- and alpha-anomers of galactose, therefore ensuring a sufficient supply of the alpha-anomer for GALK1. Also active on D-glucose although shows a preference for galactose over glucose. In Sus scrofa (Pig), this protein is Galactose mutarotase (GALM).